The chain runs to 337 residues: Ornithine carbamoyltransferase, catabolic (337 aa).

Carbamoyl phosphate is bound by residues 57–60 (STRT), Gln84, Arg108, and 135–138 (HPTQ). L-ornithine is bound by residues Asn167, Asp231, and 235–236 (SM). Residues 272 to 273 (CL) and Arg317 contribute to the carbamoyl phosphate site.

This sequence belongs to the aspartate/ornithine carbamoyltransferase superfamily. OTCase family.

Its subcellular location is the cytoplasm. It catalyses the reaction carbamoyl phosphate + L-ornithine = L-citrulline + phosphate + H(+). The protein operates within amino-acid degradation; L-arginine degradation via ADI pathway; carbamoyl phosphate from L-arginine: step 2/2. Its function is as follows. Reversibly catalyzes the transfer of the carbamoyl group from carbamoyl phosphate (CP) to the N(epsilon) atom of ornithine (ORN) to produce L-citrulline. The protein is Ornithine carbamoyltransferase, catabolic (arcB) of Streptococcus pyogenes serotype M1.